The primary structure comprises 183 residues: Ribosome maturation factor RimP (183 aa).

The protein belongs to the RimP family.

Its subcellular location is the cytoplasm. Its function is as follows. Required for maturation of 30S ribosomal subunits. The polypeptide is Ribosome maturation factor RimP (Leptothrix cholodnii (strain ATCC 51168 / LMG 8142 / SP-6) (Leptothrix discophora (strain SP-6))).